The primary structure comprises 177 residues: SPbeta prophage-derived uncharacterized protein YopI (177 aa).

Residues 11–31 (FEGIIGALLGVIVTLILTHIL) traverse the membrane as a helical segment.

It is found in the cell membrane. In Bacillus subtilis (strain 168), this protein is SPbeta prophage-derived uncharacterized protein YopI (yopI).